Reading from the N-terminus, the 47-residue chain is Large ribosomal subunit protein bL34 (47 aa).

The protein belongs to the bacterial ribosomal protein bL34 family.

This Rhodococcus erythropolis (strain PR4 / NBRC 100887) protein is Large ribosomal subunit protein bL34.